The primary structure comprises 406 residues: Argininosuccinate synthase (406 aa).

8-16 (AYSGGLDTS) contacts ATP. Position 86 (tyrosine 86) interacts with L-citrulline. Residue glycine 116 participates in ATP binding. Residues threonine 118, asparagine 122, and aspartate 123 each contribute to the L-aspartate site. Asparagine 122 is an L-citrulline binding site. L-citrulline-binding residues include arginine 126, serine 174, serine 183, glutamate 259, and tyrosine 271.

The protein belongs to the argininosuccinate synthase family. Type 1 subfamily. As to quaternary structure, homotetramer.

It is found in the cytoplasm. It catalyses the reaction L-citrulline + L-aspartate + ATP = 2-(N(omega)-L-arginino)succinate + AMP + diphosphate + H(+). It participates in amino-acid biosynthesis; L-arginine biosynthesis; L-arginine from L-ornithine and carbamoyl phosphate: step 2/3. This chain is Argininosuccinate synthase, found in Dehalococcoides mccartyi (strain ATCC BAA-2266 / KCTC 15142 / 195) (Dehalococcoides ethenogenes (strain 195)).